Consider the following 197-residue polypeptide: Rac-like GTP-binding protein RHO1 (197 aa).

Residue 13-20 (GDGAVGKT) participates in GTP binding. The short motif at 35–43 (YVPTVFDNF) is the Effector region element. Residues 60–64 (DTAGQ) and 118–121 (TKLD) contribute to the GTP site. At cysteine 194 the chain carries Cysteine methyl ester. A lipid anchor (S-geranylgeranyl cysteine) is attached at cysteine 194. A propeptide spans 195–197 (SIL) (removed in mature form).

This sequence belongs to the small GTPase superfamily. Rho family.

The protein resides in the cytoplasm. It is found in the membrane. Functionally, inactive GDP-bound Rho GTPases reside in the cytosol, are found in a complex with Rho GDP-dissociation inhibitors (Rho GDIs), and are released from the GDI protein in order to translocate to membranes upon activation. The polypeptide is Rac-like GTP-binding protein RHO1 (RHO1) (Beta vulgaris (Sugar beet)).